Here is a 163-residue protein sequence, read N- to C-terminus: Phosphopantetheine adenylyltransferase (163 aa).

Residue Thr11 participates in substrate binding. Residues 11-12 and His19 contribute to the ATP site; that span reads TF. Lys43, Leu75, and Arg89 together coordinate substrate. Residues 90–92, Glu100, and 125–131 contribute to the ATP site; these read GLR and YMFISAT.

This sequence belongs to the bacterial CoaD family. In terms of assembly, homohexamer. Mg(2+) is required as a cofactor.

The protein resides in the cytoplasm. It catalyses the reaction (R)-4'-phosphopantetheine + ATP + H(+) = 3'-dephospho-CoA + diphosphate. It functions in the pathway cofactor biosynthesis; coenzyme A biosynthesis; CoA from (R)-pantothenate: step 4/5. Its function is as follows. Reversibly transfers an adenylyl group from ATP to 4'-phosphopantetheine, yielding dephospho-CoA (dPCoA) and pyrophosphate. The polypeptide is Phosphopantetheine adenylyltransferase (Azoarcus sp. (strain BH72)).